We begin with the raw amino-acid sequence, 248 residues long: 4-hydroxy-tetrahydrodipicolinate reductase (248 aa).

NAD(+) is bound by residues 9–14, 77–79, and 104–107; these read GAKGRV, GTT, and APNF. His134 serves as the catalytic Proton donor/acceptor. His135 serves as a coordination point for (S)-2,3,4,5-tetrahydrodipicolinate. Residue Lys138 is the Proton donor of the active site. Residue 144–145 participates in (S)-2,3,4,5-tetrahydrodipicolinate binding; the sequence is GT.

The protein belongs to the DapB family.

The protein localises to the cytoplasm. The enzyme catalyses (S)-2,3,4,5-tetrahydrodipicolinate + NAD(+) + H2O = (2S,4S)-4-hydroxy-2,3,4,5-tetrahydrodipicolinate + NADH + H(+). It carries out the reaction (S)-2,3,4,5-tetrahydrodipicolinate + NADP(+) + H2O = (2S,4S)-4-hydroxy-2,3,4,5-tetrahydrodipicolinate + NADPH + H(+). It functions in the pathway amino-acid biosynthesis; L-lysine biosynthesis via DAP pathway; (S)-tetrahydrodipicolinate from L-aspartate: step 4/4. Functionally, catalyzes the conversion of 4-hydroxy-tetrahydrodipicolinate (HTPA) to tetrahydrodipicolinate. This chain is 4-hydroxy-tetrahydrodipicolinate reductase, found in Corynebacterium aurimucosum (strain ATCC 700975 / DSM 44827 / CIP 107346 / CN-1) (Corynebacterium nigricans).